The primary structure comprises 399 residues: 1-deoxy-D-xylulose 5-phosphate reductoisomerase (399 aa).

Thr-11, Gly-12, Ser-13, Ile-14, Gly-37, Asn-39, and Asn-125 together coordinate NADPH. Lys-126 serves as a coordination point for 1-deoxy-D-xylulose 5-phosphate. An NADPH-binding site is contributed by Glu-127. Asp-151 serves as a coordination point for Mn(2+). Ser-152, Glu-153, Ser-177, and His-200 together coordinate 1-deoxy-D-xylulose 5-phosphate. Residue Glu-153 participates in Mn(2+) binding. Gly-206 provides a ligand contact to NADPH. Residues Ser-213, Asn-218, Lys-219, and Glu-222 each contribute to the 1-deoxy-D-xylulose 5-phosphate site. Glu-222 serves as a coordination point for Mn(2+).

The protein belongs to the DXR family. Mg(2+) is required as a cofactor. The cofactor is Mn(2+).

It catalyses the reaction 2-C-methyl-D-erythritol 4-phosphate + NADP(+) = 1-deoxy-D-xylulose 5-phosphate + NADPH + H(+). It participates in isoprenoid biosynthesis; isopentenyl diphosphate biosynthesis via DXP pathway; isopentenyl diphosphate from 1-deoxy-D-xylulose 5-phosphate: step 1/6. In terms of biological role, catalyzes the NADPH-dependent rearrangement and reduction of 1-deoxy-D-xylulose-5-phosphate (DXP) to 2-C-methyl-D-erythritol 4-phosphate (MEP). The chain is 1-deoxy-D-xylulose 5-phosphate reductoisomerase from Nostoc sp. (strain PCC 7120 / SAG 25.82 / UTEX 2576).